A 356-amino-acid chain; its full sequence is V-type proton ATPase subunit d (356 aa).

It belongs to the V-ATPase V0D/AC39 subunit family. In terms of assembly, V-ATPase is a heteromultimeric enzyme composed of a peripheral catalytic V1 complex (components A to H) attached to an integral membrane V0 proton pore complex (components: a, c, c', c'' and d).

Subunit of the integral membrane V0 complex of vacuolar ATPase. Vacuolar ATPase is responsible for acidifying a variety of intracellular compartments in eukaryotic cells, thus providing most of the energy required for transport processes in the vacuolar system. The protein is V-type proton ATPase subunit d (vatD-1) of Dictyostelium discoideum (Social amoeba).